A 122-amino-acid chain; its full sequence is Large ribosomal subunit protein uL22 (122 aa).

A disordered region spans residues Val102–Lys122.

This sequence belongs to the universal ribosomal protein uL22 family. In terms of assembly, part of the 50S ribosomal subunit.

Its function is as follows. This protein binds specifically to 23S rRNA; its binding is stimulated by other ribosomal proteins, e.g. L4, L17, and L20. It is important during the early stages of 50S assembly. It makes multiple contacts with different domains of the 23S rRNA in the assembled 50S subunit and ribosome. In terms of biological role, the globular domain of the protein is located near the polypeptide exit tunnel on the outside of the subunit, while an extended beta-hairpin is found that lines the wall of the exit tunnel in the center of the 70S ribosome. The polypeptide is Large ribosomal subunit protein uL22 (Helicobacter pylori (strain G27)).